The sequence spans 573 residues: Cytosolic 5'-nucleotidase 1B (573 aa).

Basic residues predominate over residues 1–11 (MSQTSLKHKKK). Disordered regions lie at residues 1–200 (MSQT…PPTE) and 218–238 (EPEY…EEDE). Over residues 12 to 35 (NEPGMRYSKESLDAEKRKDSDKTG) the composition is skewed to basic and acidic residues. Positions 60–73 (NQWSRTSRSPSTGA) are enriched in polar residues. Residues 93-105 (SSTTSRTSSASPS) are compositionally biased toward low complexity. Residues 115-136 (TSEKSSIQQTPQNRPITQLESQ) are compositionally biased toward polar residues. Basic and acidic residues-rich tracts occupy residues 161–174 (WAHR…DLQL) and 182–194 (DSRE…REYP). Aspartate 428 acts as the Nucleophile in catalysis.

The protein belongs to the 5'-nucleotidase type 3 family. Mg(2+) is required as a cofactor. As to expression, expressed at highest levels in testis. Also expressed in brain, skeletal muscle, kidney and heart.

The protein resides in the cytoplasm. It carries out the reaction a ribonucleoside 5'-phosphate + H2O = a ribonucleoside + phosphate. The catalysed reaction is AMP + H2O = adenosine + phosphate. With respect to regulation, activated by ADP. Its function is as follows. Catalyzes the hydrolysis of nucleotide monophosphates, releasing inorganic phosphate and the corresponding nucleoside, AMP is the major substrate. In Mus musculus (Mouse), this protein is Cytosolic 5'-nucleotidase 1B (Nt5c1b).